Reading from the N-terminus, the 446-residue chain is Packaging protein 1 (446 aa).

A disordered region spans residues 1–71 (MEEKAGLGRL…QPQASKPKKH (71 aa)). Residues 31–43 (FHSDRNHPNKEAE) are compositionally biased toward basic and acidic residues. An ATP-binding site is contributed by 170-177 (GPTGCGKS). Residues 439-446 (RYYHSKKK) are DNA-binding.

This sequence belongs to the adenoviridae packaging protein 1 family. Homodimer. Part of a genome packaging complex composed of packaging proteins 1, 2 and 3; this complex specifically binds to the packaging sequence on the left end of viral genomic DNA and performs packaging of the viral genome. Interacts with protein 33K.

It localises to the virion. The protein resides in the host nucleus. It is found in the host nucleoplasm. Its subcellular location is the host nucleolus. In terms of biological role, component of the packaging machinery which encapsidates the viral DNA into preformed capsids and transcriptional activator of the viral major late promoter (MLP). Binds, along with packaging proteins 2 and 3, to the specific packaging sequence on the left end of viral genomic DNA and displays ATPase activity thereby providing the power stroke of the packaging machinery. The activity of packaging protein IVa2 is stimulated by protein 33K which acts as a terminase. May be the protein that pumps DNA into the capsid powered by ATP hydrolysis. Specifically binds to the 5'-CG-3' nucleotides of the repeats making up the packaging sequence. Component of the DEF-A and DEF-B transcription factors that bind downstream elements of the major late promoter (MLP), and stimulate transcription from the MLP after initiation of viral DNA replication. DEF-A is a heterodimer packaging proteins 1 and 2 and DEF-B is a homodimer of packaging protein 1. The protein is Packaging protein 1 of Canine adenovirus serotype 2 (strain Toronto A 26-61) (CAdV-2).